The chain runs to 213 residues: Nucleoside triphosphate pyrophosphatase (213 aa).

Catalysis depends on Asp77, which acts as the Proton acceptor.

It belongs to the Maf family. Requires a divalent metal cation as cofactor.

The protein localises to the cytoplasm. The enzyme catalyses a ribonucleoside 5'-triphosphate + H2O = a ribonucleoside 5'-phosphate + diphosphate + H(+). It carries out the reaction a 2'-deoxyribonucleoside 5'-triphosphate + H2O = a 2'-deoxyribonucleoside 5'-phosphate + diphosphate + H(+). In terms of biological role, nucleoside triphosphate pyrophosphatase. May have a dual role in cell division arrest and in preventing the incorporation of modified nucleotides into cellular nucleic acids. The chain is Nucleoside triphosphate pyrophosphatase from Cutibacterium acnes (strain DSM 16379 / KPA171202) (Propionibacterium acnes).